The chain runs to 59 residues: Conotoxin ViVA (59 aa).

An N-terminal signal peptide occupies residues 1-19 (MRCVPVFIILLLLIPSASS). Residues 20–46 (AAVQPKTEKDDVPLASVHDSALRILSR) constitute a propeptide that is removed on maturation. Pyrrolidone carboxylic acid is present on Gln-47. 2 cysteine pairs are disulfide-bonded: Cys-48/Cys-55 and Cys-49/Cys-56. Ile-58 is subject to Isoleucine amide.

It belongs to the conotoxin T superfamily. Expressed by the venom duct.

It is found in the secreted. The chain is Conotoxin ViVA from Conus virgo (Virgin cone).